Here is a 217-residue protein sequence, read N- to C-terminus: MLLQPVWKGCRWTQFVRPIRRWNSTGTNRGVPFSFKDISNQEDITNISYPSSSDSVLTKSNGSSEVYKPKEEVVKYILHGKFTKNNTHLTFSSVVEDKNFHKNKGLTYNDTMLYYLNLPQKVKISLSTGCLGFRKAARGEYEAAFQTSGRMFELIKEKNMLNKDIEVVMDDFGKGRAAFISALVGKEGASVVKKVVKISDATKLKFGGVRSPKMRRL.

The transit peptide at 1 to 59 directs the protein to the mitochondrion; sequence MLLQPVWKGCRWTQFVRPIRRWNSTGTNRGVPFSFKDISNQEDITNISYPSSSDSVLTK.

The protein belongs to the universal ribosomal protein uS11 family. As to quaternary structure, component of the mitochondrial small ribosomal subunit (mt-SSU). Mature yeast 74S mitochondrial ribosomes consist of a small (37S) and a large (54S) subunit. The 37S small subunit contains a 15S ribosomal RNA (15S mt-rRNA) and 34 different proteins. The 54S large subunit contains a 21S rRNA (21S mt-rRNA) and 46 different proteins.

It localises to the mitochondrion. In terms of biological role, component of the mitochondrial ribosome (mitoribosome), a dedicated translation machinery responsible for the synthesis of mitochondrial genome-encoded proteins, including at least some of the essential transmembrane subunits of the mitochondrial respiratory chain. The mitoribosomes are attached to the mitochondrial inner membrane and translation products are cotranslationally integrated into the membrane. This Saccharomyces cerevisiae (strain ATCC 204508 / S288c) (Baker's yeast) protein is Small ribosomal subunit protein uS11m (MRPS18).